Consider the following 177-residue polypeptide: Nucleoside triphosphate/diphosphate phosphatase (177 aa).

Arg-23 acts as the Proton donor in catalysis. Residues Asn-87, Asp-103, Asp-105, Asp-107, Asp-120, and Glu-123 each coordinate Mg(2+).

It belongs to the Ntdp family. Mg(2+) is required as a cofactor.

The catalysed reaction is a ribonucleoside 5'-triphosphate + H2O = a ribonucleoside 5'-diphosphate + phosphate + H(+). It catalyses the reaction a ribonucleoside 5'-diphosphate + H2O = a ribonucleoside 5'-phosphate + phosphate + H(+). Functionally, has nucleoside phosphatase activity towards nucleoside triphosphates and nucleoside diphosphates. The chain is Nucleoside triphosphate/diphosphate phosphatase from Streptococcus suis (strain 98HAH33).